Consider the following 156-residue polypeptide: Transcriptional repressor NrdR (156 aa).

The segment at 3-34 (CPKCNSTHSRVVDSRHADEVNAIRRRRECEEC) is a zinc-finger region. The region spanning 49 to 139 (LIVVKKDGTR…VYKEFKDVDQ (91 aa)) is the ATP-cone domain.

Belongs to the NrdR family. Zn(2+) is required as a cofactor.

Negatively regulates transcription of bacterial ribonucleotide reductase nrd genes and operons by binding to NrdR-boxes. In Staphylococcus saprophyticus subsp. saprophyticus (strain ATCC 15305 / DSM 20229 / NCIMB 8711 / NCTC 7292 / S-41), this protein is Transcriptional repressor NrdR.